The following is a 79-amino-acid chain: Ferredoxin oxidoreductase 1 subunit ForD (79 aa).

4Fe-4S ferredoxin-type domains lie at 3–35 (YVAQ…YTDE) and 37–65 (HHAY…RDSI). [4Fe-4S] cluster contacts are provided by C12, C17, C20, C24, C46, C49, C52, and C56.

As to quaternary structure, heterotetramer of one alpha, one beta, one delta and one gamma chain. Requires [4Fe-4S] cluster as cofactor.

This Aquifex aeolicus (strain VF5) protein is Ferredoxin oxidoreductase 1 subunit ForD (forD1).